Consider the following 131-residue polypeptide: Large ribosomal subunit protein bL19 (131 aa).

The protein belongs to the bacterial ribosomal protein bL19 family.

Functionally, this protein is located at the 30S-50S ribosomal subunit interface and may play a role in the structure and function of the aminoacyl-tRNA binding site. This Anaeromyxobacter dehalogenans (strain 2CP-C) protein is Large ribosomal subunit protein bL19.